Consider the following 596-residue polypeptide: Arginine--tRNA ligase (596 aa).

The 'HIGH' region signature appears at 127–137 (ANPTGPVHVGR).

The protein belongs to the class-I aminoacyl-tRNA synthetase family.

Its subcellular location is the cytoplasm. It carries out the reaction tRNA(Arg) + L-arginine + ATP = L-arginyl-tRNA(Arg) + AMP + diphosphate. This Haloquadratum walsbyi (strain DSM 16790 / HBSQ001) protein is Arginine--tRNA ligase.